The sequence spans 445 residues: RING finger and transmembrane domain-containing protein 2 (445 aa).

The Extracellular segment spans residues methionine 1–lysine 183. The disordered stretch occupies residues lysine 12 to aspartate 41. Residues leucine 184–leucine 203 form a helical membrane-spanning segment. Topologically, residues arginine 204–valine 215 are cytoplasmic. Residues leucine 216–phenylalanine 236 traverse the membrane as a helical segment. The Extracellular segment spans residues serine 237–aspartate 256. A helical transmembrane segment spans residues phenylalanine 257–alanine 277. The Cytoplasmic segment spans residues leucine 278 to serine 330. The chain crosses the membrane as a helical span at residues tyrosine 331–glycine 351. The Extracellular segment spans residues arginine 352–tyrosine 445. Residues cysteine 385–arginine 423 form an RING-type zinc finger.

It is found in the membrane. Its function is as follows. E3 ubiquitin-protein ligase that negatively regulates IL3-dependent cellular responses through IL3RA ubiquitination and degradation by the proteasome, having an anti-inflammatory effect. This Mus musculus (Mouse) protein is RING finger and transmembrane domain-containing protein 2 (Rnft2).